The following is a 208-amino-acid chain: Large ribosomal subunit protein bL9 (208 aa).

The tract at residues 168–208 is disordered; the sequence is GKVEKGSCTEGESLELGSVDNDINSGNVDSNESEKQDSVSE. The segment covering 188–197 has biased composition (polar residues); sequence NDINSGNVDS. Positions 199-208 are enriched in basic and acidic residues; sequence ESEKQDSVSE.

This sequence belongs to the bacterial ribosomal protein bL9 family.

Functionally, binds to the 23S rRNA. The chain is Large ribosomal subunit protein bL9 from Ehrlichia chaffeensis (strain ATCC CRL-10679 / Arkansas).